A 354-amino-acid chain; its full sequence is NADH-quinone oxidoreductase subunit H (354 aa).

The next 8 membrane-spanning stretches (helical) occupy residues 16–36, 90–110, 126–146, 170–190, 197–217, 249–269, 290–310, and 329–349; these read WLAV…PVMI, YLFI…WAVI, VLYV…SGWA, MGFA…TGIV, IWNW…ISGL, VFFL…AIMF, VPGF…FLWF, and VLIP…YFKV.

Belongs to the complex I subunit 1 family. In terms of assembly, NDH-1 is composed of 14 different subunits. Subunits NuoA, H, J, K, L, M, N constitute the membrane sector of the complex.

Its subcellular location is the cell inner membrane. It catalyses the reaction a quinone + NADH + 5 H(+)(in) = a quinol + NAD(+) + 4 H(+)(out). Functionally, NDH-1 shuttles electrons from NADH, via FMN and iron-sulfur (Fe-S) centers, to quinones in the respiratory chain. The immediate electron acceptor for the enzyme in this species is believed to be ubiquinone. Couples the redox reaction to proton translocation (for every two electrons transferred, four hydrogen ions are translocated across the cytoplasmic membrane), and thus conserves the redox energy in a proton gradient. This subunit may bind ubiquinone. This Hydrogenovibrio crunogenus (strain DSM 25203 / XCL-2) (Thiomicrospira crunogena) protein is NADH-quinone oxidoreductase subunit H.